A 201-amino-acid polypeptide reads, in one-letter code: ADP-ribosylation factor-related protein 1 (201 aa).

Position 1 is an N-acetylmethionine (M1). Residues 24–31 (GLDNAGKT), 75–79 (DLGGQ), and 134–137 (NKQD) each bind GTP.

It belongs to the small GTPase superfamily. Arf family. Interacts with SYS1.

The protein resides in the golgi apparatus. It is found in the trans-Golgi network. Its function is as follows. Trans-Golgi-associated GTPase that regulates protein sorting. Controls the targeting of ARL1 and its effector to the trans-Golgi. Required for the lipidation of chylomicrons in the intestine and required for VLDL lipidation in the liver. This chain is ADP-ribosylation factor-related protein 1 (ARFRP1), found in Pongo abelii (Sumatran orangutan).